Consider the following 284-residue polypeptide: Bifunctional protein FolD (284 aa).

NADP(+)-binding positions include 164–166 (GRG), Ser189, and Ile230.

Belongs to the tetrahydrofolate dehydrogenase/cyclohydrolase family. As to quaternary structure, homodimer.

The enzyme catalyses (6R)-5,10-methylene-5,6,7,8-tetrahydrofolate + NADP(+) = (6R)-5,10-methenyltetrahydrofolate + NADPH. It catalyses the reaction (6R)-5,10-methenyltetrahydrofolate + H2O = (6R)-10-formyltetrahydrofolate + H(+). Its pathway is one-carbon metabolism; tetrahydrofolate interconversion. Catalyzes the oxidation of 5,10-methylenetetrahydrofolate to 5,10-methenyltetrahydrofolate and then the hydrolysis of 5,10-methenyltetrahydrofolate to 10-formyltetrahydrofolate. This chain is Bifunctional protein FolD, found in Desulforamulus reducens (strain ATCC BAA-1160 / DSM 100696 / MI-1) (Desulfotomaculum reducens).